We begin with the raw amino-acid sequence, 563 residues long: CTP synthase (563 aa).

Positions 1–278 (MAKATAKNSA…DLRVLEQLHL (278 aa)) are amidoligase domain. A CTP-binding site is contributed by S24. Residue S24 coordinates UTP. ATP is bound at residue 25 to 30 (SLGKGI). Y65 serves as a coordination point for L-glutamine. D82 serves as a coordination point for ATP. The Mg(2+) site is built by D82 and E151. Residues 158-160 (DIE), 198-203 (KTKPSQ), and K234 each bind CTP. Residues 198 to 203 (KTKPSQ) and K234 each bind UTP. 250–252 (KDV) lines the ATP pocket. The 243-residue stretch at 303-545 (TIALVGKYIA…VKAALEQKKA (243 aa)) folds into the Glutamine amidotransferase type-1 domain. Position 363 (G363) interacts with L-glutamine. C390 (nucleophile; for glutamine hydrolysis) is an active-site residue. L-glutamine is bound by residues 391-394 (LGMQ), E414, and R471. Catalysis depends on residues H518 and E520. The disordered stretch occupies residues 542–563 (QKKANGKKPTAPSEKTKKTKTK).

It belongs to the CTP synthase family. As to quaternary structure, homotetramer.

The catalysed reaction is UTP + L-glutamine + ATP + H2O = CTP + L-glutamate + ADP + phosphate + 2 H(+). The enzyme catalyses L-glutamine + H2O = L-glutamate + NH4(+). It catalyses the reaction UTP + NH4(+) + ATP = CTP + ADP + phosphate + 2 H(+). It participates in pyrimidine metabolism; CTP biosynthesis via de novo pathway; CTP from UDP: step 2/2. With respect to regulation, allosterically activated by GTP, when glutamine is the substrate; GTP has no effect on the reaction when ammonia is the substrate. The allosteric effector GTP functions by stabilizing the protein conformation that binds the tetrahedral intermediate(s) formed during glutamine hydrolysis. Inhibited by the product CTP, via allosteric rather than competitive inhibition. Functionally, catalyzes the ATP-dependent amination of UTP to CTP with either L-glutamine or ammonia as the source of nitrogen. Regulates intracellular CTP levels through interactions with the four ribonucleotide triphosphates. This is CTP synthase from Fibrobacter succinogenes (strain ATCC 19169 / S85).